Consider the following 455-residue polypeptide: Argininosuccinate lyase (455 aa).

Belongs to the lyase 1 family. Argininosuccinate lyase subfamily.

The protein resides in the cytoplasm. The enzyme catalyses 2-(N(omega)-L-arginino)succinate = fumarate + L-arginine. It participates in amino-acid biosynthesis; L-arginine biosynthesis; L-arginine from L-ornithine and carbamoyl phosphate: step 3/3. In Shewanella oneidensis (strain ATCC 700550 / JCM 31522 / CIP 106686 / LMG 19005 / NCIMB 14063 / MR-1), this protein is Argininosuccinate lyase.